A 309-amino-acid polypeptide reads, in one-letter code: Homoserine kinase (309 aa).

91–101 (PLARGLGSSAA) serves as a coordination point for ATP.

Belongs to the GHMP kinase family. Homoserine kinase subfamily.

It is found in the cytoplasm. It catalyses the reaction L-homoserine + ATP = O-phospho-L-homoserine + ADP + H(+). Its pathway is amino-acid biosynthesis; L-threonine biosynthesis; L-threonine from L-aspartate: step 4/5. Catalyzes the ATP-dependent phosphorylation of L-homoserine to L-homoserine phosphate. The protein is Homoserine kinase of Bacillus velezensis (strain DSM 23117 / BGSC 10A6 / LMG 26770 / FZB42) (Bacillus amyloliquefaciens subsp. plantarum).